The chain runs to 587 residues: MTFYLSGFRSFLKLWKSNPYFELGPATSSASFFLGVHCVIGNQQRWFSVKPTTPPNSKILNLLVTKARTLKKGNDSNKQASSGPHYFAAGEAKKRSHLSGNPQNQGHTLPVKSTVQLPTKPLNSEEWDKLKEDFKGKASFEDFVISQMTRSCSSVDVAKSLLAWVAAKNNGIVGYNLLVKYLYLCVFHKQTSEVIDVYEIMKAKYKSLESGGYTLLIRGLIHSDRWREALLLLEDIKKVMVPSKKNYGDCIQGALLHQDVNVAWSLYQELVGHNLIPLLETLKAFFDHGKDMNDDQYSNQLLDILLYLRNNQLYPGESFAHSIKTWFESIPGRQWKGQFTTIQKSGQCSSCGRAIESIHLSPEEYEFLKETIMRDVIDGGDQYKKTTPQELKRFERFVKSCPPFDIVIDGLNVAKMFPKGRESQNLLGIVSQLAQQNLQLLVLGRKHMLRPSSQWRKDEMEQVRKQAHCFFADNISEDDPFLLYATLNSGSHCKFITKDLLRDHKACLPDARAQRLFFKWQQGHQLAITKGFLKSKLTFQHILSYDTVVQTTGDTWHIPYDEDLVPRSSCEVPTKWLCLQRKTPAPC.

A mitochondrion-targeting transit peptide spans 1 to 46 (MTFYLSGFRSFLKLWKSNPYFELGPATSSASFFLGVHCVIGNQQRW). The tract at residues 94–114 (KRSHLSGNPQNQGHTLPVKST) is disordered. Positions 98–114 (LSGNPQNQGHTLPVKST) are enriched in polar residues. Residues 342 to 578 (IQKSGQCSSC…SCEVPTKWLC (237 aa)) form the PRORP domain. Zn(2+) contacts are provided by cysteine 348 and cysteine 351. Mg(2+)-binding residues include aspartate 409, aspartate 478, aspartate 479, and aspartate 499. Residues histidine 557 and cysteine 578 each coordinate Zn(2+).

The protein belongs to the PPR family. P subfamily. In terms of assembly, catalytic component of mitochondrial ribonuclease P, a complex composed of TRMT10C/MRPP1, HSD17B10/MRPP2 and PRORP/MRPP3. It depends on Mg(2+) as a cofactor. Requires Mn(2+) as cofactor. Degraded by LONP1 following mitochondrial unfolded protein response, probably leading to inhibit translation in mitochondrion.

The protein resides in the mitochondrion. The catalysed reaction is Endonucleolytic cleavage of RNA, removing 5'-extranucleotides from tRNA precursor.. Its function is as follows. Catalytic ribonuclease component of mitochondrial ribonuclease P, a complex composed of TRMT10C/MRPP1, HSD17B10/MRPP2 and PRORP/MRPP3, which cleaves tRNA molecules in their 5'-ends. The presence of TRMT10C/MRPP1, HSD17B10/MRPP2 is required to catalyze tRNA molecules in their 5'-ends. In Rattus norvegicus (Rat), this protein is Mitochondrial ribonuclease P catalytic subunit (Prorp).